The primary structure comprises 806 residues: Acetyl-CoA decarbonylase/synthase complex subunit alpha 1 (806 aa).

The [4Fe-4S] cluster site is built by Cys-73, Cys-76, Cys-77, Cys-79, Cys-84, and Cys-94. His-117 provides a ligand contact to CO. [Ni-4Fe-4S] cluster is bound by residues His-250, Cys-278, and Cys-323. 2 4Fe-4S ferredoxin-type domains span residues 407 to 436 (DEEF…IPEA) and 446 to 475 (SYLE…LNII). Cys-417, Cys-420, Cys-423, Cys-427, Cys-455, Cys-458, Cys-461, and Cys-465 together coordinate [4Fe-4S] cluster. Positions 523, 552, and 587 each coordinate [Ni-4Fe-4S] cluster.

This sequence belongs to the Ni-containing carbon monoxide dehydrogenase family. Heterotetramer of two alpha and two epsilon subunits. The ACDS complex is made up of alpha, epsilon, beta, gamma and delta subunits with a probable stoichiometry of (alpha(2)epsilon(2))(4)-beta(8)-(gamma(1)delta(1))(8). The cofactor is [4Fe-4S] cluster. [Ni-4Fe-4S] cluster serves as cofactor.

It carries out the reaction CO + 2 oxidized [2Fe-2S]-[ferredoxin] + H2O = 2 reduced [2Fe-2S]-[ferredoxin] + CO2 + 2 H(+). It participates in one-carbon metabolism; methanogenesis from acetate. Part of the ACDS complex that catalyzes the reversible cleavage of acetyl-CoA, allowing growth on acetate as sole source of carbon and energy. The alpha-epsilon subcomponent functions as a carbon monoxide dehydrogenase. This is Acetyl-CoA decarbonylase/synthase complex subunit alpha 1 from Methanosarcina acetivorans (strain ATCC 35395 / DSM 2834 / JCM 12185 / C2A).